The following is a 237-amino-acid chain: Ribosomal RNA small subunit methyltransferase G (237 aa).

Residues Gly-78, Phe-83, 129-130 (AE), and Arg-148 contribute to the S-adenosyl-L-methionine site.

Belongs to the methyltransferase superfamily. RNA methyltransferase RsmG family.

It localises to the cytoplasm. Its function is as follows. Specifically methylates the N7 position of a guanine in 16S rRNA. The chain is Ribosomal RNA small subunit methyltransferase G from Streptococcus pyogenes serotype M6 (strain ATCC BAA-946 / MGAS10394).